Reading from the N-terminus, the 507-residue chain is Transmembrane protein 184 homolog DDB_G0276041 (507 aa).

7 consecutive transmembrane segments (helical) span residues 13 to 33 (IVMLSIGSFFALGSIIIAVIL), 50 to 70 (IVRIIMIAPIYAIHSLLSLFF), 88 to 108 (AYVLYCFFKLLICFLGGEEAL), 141 to 161 (LGLVLQYAIIKPTLAIVAAIL), 179 to 199 (LWITVINNISVLIALYFLVMF), 222 to 242 (VVFFLFWQTVVITVLIWFDAL), and 260 to 280 (FLVCIEMFITSIAMGICFSYS). Asparagine 360, asparagine 375, asparagine 470, asparagine 473, asparagine 477, and asparagine 498 each carry an N-linked (GlcNAc...) asparagine glycan. Positions 448–500 (NGASNNNNNNNNNNNNINNNNNNNSNNSNNNSNSQFESIDINSNSVNSNKNQS) are disordered. Over residues 451 to 500 (SNNNNNNNNNNNNINNNNNNNSNNSNNNSNSQFESIDINSNSVNSNKNQS) the composition is skewed to low complexity.

This sequence belongs to the TMEM184 family.

It localises to the cell membrane. In terms of biological role, probable transporter. This is Transmembrane protein 184 homolog DDB_G0276041 (tmem184B) from Dictyostelium discoideum (Social amoeba).